A 388-amino-acid chain; its full sequence is Processive diacylglycerol beta-glucosyltransferase (388 aa).

Belongs to the glycosyltransferase 28 family. UgtP subfamily.

It is found in the cell membrane. It catalyses the reaction a 1,2-diacyl-3-O-(beta-D-glucopyranosyl)-sn-glycerol + UDP-alpha-D-glucose = a 1,2-diacyl-3-O-(beta-D-Glc-(1-&gt;6)-beta-D-Glc)-sn-glycerol + UDP + H(+). The catalysed reaction is a 1,2-diacyl-3-O-(beta-D-Glc-(1-&gt;6)-beta-D-Glc)-sn-glycerol + UDP-alpha-D-glucose = a 1,2-diacyl-3-O-(beta-D-Glc-(1-&gt;6)-beta-D-Glc-(1-&gt;6)-beta-D-Glc)-sn-glycerol + UDP + H(+). It carries out the reaction a 1,2-diacyl-sn-glycerol + UDP-alpha-D-glucose = a 1,2-diacyl-3-O-(beta-D-glucopyranosyl)-sn-glycerol + UDP + H(+). It functions in the pathway glycolipid metabolism; diglucosyl-diacylglycerol biosynthesis. Processive glucosyltransferase involved in the biosynthesis of both the bilayer- and non-bilayer-forming membrane glucolipids. Is able to successively transfer up to three glucosyl residues to diacylglycerol (DAG), thereby catalyzing the formation of beta-monoglucosyl-DAG (3-O-(beta-D-glucopyranosyl)-1,2-diacyl-sn-glycerol), beta-diglucosyl-DAG (3-O-(beta-D-glucopyranosyl-beta-(1-&gt;6)-D-glucopyranosyl)-1,2-diacyl-sn-glycerol) and beta-triglucosyl-DAG (3-O-(beta-D-glucopyranosyl-beta-(1-&gt;6)-D-glucopyranosyl-beta-(1-&gt;6)-D-glucopyranosyl)-1,2-diacyl-sn-glycerol). Beta-diglucosyl-DAG is the predominant glycolipid found in Bacillales and is also used as a membrane anchor for lipoteichoic acid (LTA). This chain is Processive diacylglycerol beta-glucosyltransferase, found in Bacillus cytotoxicus (strain DSM 22905 / CIP 110041 / 391-98 / NVH 391-98).